The primary structure comprises 402 residues: Tryptophan synthase beta chain (402 aa).

K88 is subject to N6-(pyridoxal phosphate)lysine.

The protein belongs to the TrpB family. Tetramer of two alpha and two beta chains. Pyridoxal 5'-phosphate serves as cofactor.

The enzyme catalyses (1S,2R)-1-C-(indol-3-yl)glycerol 3-phosphate + L-serine = D-glyceraldehyde 3-phosphate + L-tryptophan + H2O. The protein operates within amino-acid biosynthesis; L-tryptophan biosynthesis; L-tryptophan from chorismate: step 5/5. Functionally, the beta subunit is responsible for the synthesis of L-tryptophan from indole and L-serine. This chain is Tryptophan synthase beta chain (trpB), found in Pasteurella multocida (strain Pm70).